We begin with the raw amino-acid sequence, 660 residues long: Peroxisomal acyl-coenzyme A oxidase 1 (660 aa).

Residue Ser26 is modified to Phosphoserine. Lys89 and Lys90 each carry N6-succinyllysine. The FAD site is built by Thr139 and Gly178. An N6-acetyllysine modification is found at Lys216. Lys241 carries the post-translational modification N6-succinyllysine. N6-acetyllysine is present on residues Lys255, Lys267, and Lys272. Residue Lys349 is modified to N6-succinyllysine. Catalysis depends on Glu421, which acts as the Proton acceptor. N6-acetyllysine; alternate is present on residues Lys437 and Lys446. Lys437 and Lys446 each carry N6-succinyllysine; alternate. Lys500 and Lys504 each carry N6-acetyllysine. Lys512 is modified (N6-acetyllysine; alternate). At Lys512 the chain carries N6-succinyllysine; alternate. Lys542 carries the post-translational modification N6-succinyllysine. Position 637 is an N6-acetyllysine; alternate (Lys637). An N6-succinyllysine; alternate modification is found at Lys637. Position 643 is an N6-succinyllysine (Lys643). The residue at position 649 (Ser649) is a Phosphoserine. Residue Lys651 is modified to N6-acetyllysine. The residue at position 654 (Lys654) is an N6-succinyllysine. The Microbody targeting signal signature appears at Ser658–Leu660.

The protein belongs to the acyl-CoA oxidase family. In terms of assembly, homodimer. Interacts with LONP2. Requires FAD as cofactor. In terms of tissue distribution, widely expressed with highest levels of isoform 1 and isoform 2 detected in testis. Isoform 1 is expressed at higher levels than isoform 2 in liver and kidney while isoform 2 levels are higher in brain, lung, muscle, white adipose tissue and testis. Levels are almost equal in heart.

Its subcellular location is the peroxisome. The enzyme catalyses a 2,3-saturated acyl-CoA + O2 = a (2E)-enoyl-CoA + H2O2. It catalyses the reaction hexadecanoyl-CoA + O2 = (2E)-hexadecenoyl-CoA + H2O2. The catalysed reaction is dodecanoyl-CoA + O2 = (2E)-dodecenoyl-CoA + H2O2. It carries out the reaction octanoyl-CoA + O2 = (2E)-octenoyl-CoA + H2O2. The enzyme catalyses decanoyl-CoA + O2 = (2E)-decenoyl-CoA + H2O2. It catalyses the reaction tetradecanoyl-CoA + O2 = (2E)-tetradecenoyl-CoA + H2O2. The catalysed reaction is hexadecanedioyl-CoA + O2 = (2E)-hexadecenedioyl-CoA + H2O2. It carries out the reaction (5Z,8Z,11Z,14Z,17Z)-eicosapentaenoyl-CoA + O2 = (2E,5Z,8Z,11Z,14Z,17Z)-icosahexaenoyl-CoA + H2O2. The enzyme catalyses tetracosanoyl-CoA + O2 = (2E)-tetracosenoyl-CoA + H2O2. It catalyses the reaction glutaryl-CoA + O2 = (2E)-glutaconyl-CoA + H2O2. The catalysed reaction is hexanoyl-CoA + O2 = (2E)-hexenoyl-CoA + H2O2. It carries out the reaction octadecanoyl-CoA + O2 = (2E)-octadecenoyl-CoA + H2O2. The enzyme catalyses (6Z,9Z,12Z,15Z,18Z,21Z)-tetracosahexaenoyl-CoA + O2 = (2E,6Z,9Z,12Z,15Z,18Z,21Z)-tetracosaheptaenoyl-CoA + H2O2. It participates in lipid metabolism; peroxisomal fatty acid beta-oxidation. Involved in the initial and rate-limiting step of peroxisomal beta-oxidation of straight-chain saturated and unsaturated very-long-chain fatty acids. Catalyzes the desaturation of fatty acyl-CoAs such as palmitoyl-CoA (hexadecanoyl-CoA) to 2-trans-enoyl-CoAs ((2E)-enoyl-CoAs) such as (2E)-hexadecenoyl-CoA, and donates electrons directly to molecular oxygen (O(2)), thereby producing hydrogen peroxide (H(2)O(2)). Its function is as follows. Shows highest activity against medium-chain fatty acyl-CoAs. Shows optimum activity with a chain length of 10 carbons (decanoyl-CoA) in vitro. Functionally, is active against a much broader range of substrates and shows activity towards long-chain fatty acyl-CoAs. The polypeptide is Peroxisomal acyl-coenzyme A oxidase 1 (Homo sapiens (Human)).